A 63-amino-acid polypeptide reads, in one-letter code: Large ribosomal subunit protein uL29 (63 aa).

The protein belongs to the universal ribosomal protein uL29 family.

This chain is Large ribosomal subunit protein uL29, found in Escherichia coli O8 (strain IAI1).